Consider the following 190-residue polypeptide: Elongation factor P-like protein (190 aa).

Belongs to the elongation factor P family.

The chain is Elongation factor P-like protein from Photorhabdus laumondii subsp. laumondii (strain DSM 15139 / CIP 105565 / TT01) (Photorhabdus luminescens subsp. laumondii).